Consider the following 562-residue polypeptide: Phosphatidylinositol 4-phosphate 5-kinase type-1 alpha (562 aa).

A PIPK domain is found at 81-449 (TSSALKGAIQ…RFQRFMCNTV (369 aa)). A Glycyl lysine isopeptide (Lys-Gly) (interchain with G-Cter in ubiquitin) cross-link involves residue K103. Position 486 is a phosphoserine (S486). Positions 506-526 (HLGRPDVLPQTPPLEEISEGS) are disordered.

As to quaternary structure, interacts with RAC1. Interacts with TUT1. Forms a complex with CDH1/E-cadherin, CTNNB1/beta-catenin and CTNND1 at the plasma membrane upon calcium stimulation. Found in a ternary complex with IRS1 and DGKZ in the absence of insulin stimulation. Interacts with DGKZ. Interacts with PIP4K2C; the interaction inhibits PIP5K1A kinase activity. In terms of tissue distribution, highly expressed in heart, placenta, skeletal muscle, kidney and pancreas. Detected at lower levels in brain, lung and liver.

The protein resides in the cell membrane. It is found in the cytoplasm. The protein localises to the nucleus. Its subcellular location is the nucleus speckle. It localises to the cell projection. The protein resides in the ruffle. It is found in the lamellipodium. It carries out the reaction a 1,2-diacyl-sn-glycero-3-phospho-(1D-myo-inositol 4-phosphate) + ATP = a 1,2-diacyl-sn-glycero-3-phospho-(1D-myo-inositol-4,5-bisphosphate) + ADP + H(+). The catalysed reaction is 1-octadecanoyl-2-(5Z,8Z,11Z,14Z)-eicosatetraenoyl-sn-glycero-3-phospho-1D-myo-inositol 4-phosphate + ATP = 1-octadecanoyl-2-(5Z,8Z,11Z,14Z)-eicosatetraenoyl-sn-glycero-3-phospho-1D-myo-inositol 4,5-bisphosphate + ADP + H(+). It catalyses the reaction 1,2-dihexadecanoyl-sn-glycero-3-phospho-(1D-myo-inositol-4-phosphate) + ATP = 1,2-dihexadecanoyl-sn-glycero-3-phospho-(1D-myo-inositol-4,5-bisphosphate) + ADP + H(+). The enzyme catalyses 1-octadecanoyl-2-(9Z)-octadecenoyl-sn-glycero-3-phospho-1D-myo-inositol 4-phosphate + ATP = 1-octadecanoyl-2-(9Z)-octadecenoyl-sn-glycero-3-phospho-1D-myo-inositol 4,5-bisphosphate + ADP + H(+). It carries out the reaction 1-octadecanoyl-2-(9Z)-octadecenoyl-sn-glycero-3-phospho-1D-myo-inositol + ATP = 1-octadecanoyl-2-(9Z)-octadecenoyl-sn-glycero-3-phospho-1D-myo-inositol 5-phosphate + ADP + H(+). The catalysed reaction is 1-octadecanoyl-2-(9Z,12Z)-octadecadienoyl-sn-glycero-3-phospho-1D-myo-inositol + ATP = 1-octadecanoyl-2-(9Z,12Z)-octadecadienoyl-sn-glycero-3-phospho-1D-myo-inositol 5-phosphate + ADP + H(+). It catalyses the reaction 1-octadecanoyl-2-(5Z,8Z,11Z,14Z-eicosatetraenoyl)-sn-glycero-3-phospho-(1D-myo-inositol) + ATP = 1-octadecanoyl-2-(5Z,8Z,11Z,14Z)-eicosatetraenoyl-sn-glycero-3-phospho-1D-myo-inositol 5-phosphate + ADP + H(+). The enzyme catalyses 1,2-di-(9Z,12Z)-octadecadienoyl-sn-glycero-3-phospho-1D-myo-inositol + ATP = 1,2-di(9Z,12Z)-octadecadienoyl-sn-glycero-3-phospho-1D-myo-inositol 5-phosphate + ADP + H(+). With respect to regulation, activated by diarachidonoyl phosphatidic acid (DAPA), when 1,2-dipalmitoyl-PI4P is used as a substrate. In terms of biological role, catalyzes the phosphorylation of phosphatidylinositol 4-phosphate (PtdIns(4)P/PI4P) to form phosphatidylinositol 4,5-bisphosphate (PtdIns(4,5)P2/PIP2), a lipid second messenger that regulates several cellular processes such as signal transduction, vesicle trafficking, actin cytoskeleton dynamics, cell adhesion, and cell motility. PtdIns(4,5)P2 can directly act as a second messenger or can be utilized as a precursor to generate other second messengers: inositol 1,4,5-trisphosphate (IP3), diacylglycerol (DAG) or phosphatidylinositol-3,4,5-trisphosphate (PtdIns(3,4,5)P3/PIP3). PIP5K1A-mediated phosphorylation of PtdIns(4)P is the predominant pathway for PtdIns(4,5)P2 synthesis. Can also use phosphatidylinositol (PtdIns) as substrate in vitro. Together with PIP5K1C, is required for phagocytosis, both enzymes regulating different types of actin remodeling at sequential steps. Promotes particle ingestion by activating the WAS GTPase-binding protein that induces Arp2/3 dependent actin polymerization at the nascent phagocytic cup. Together with PIP5K1B, is required, after stimulation by G-protein coupled receptors, for the synthesis of IP3 that will induce stable platelet adhesion. Recruited to the plasma membrane by the E-cadherin/beta-catenin complex where it provides the substrate PtdIns(4,5)P2 for the production of PtdIns(3,4,5)P3, IP3 and DAG, that will mobilize internal calcium and drive keratinocyte differentiation. Positively regulates insulin-induced translocation of SLC2A4 to the cell membrane in adipocytes. Together with PIP5K1C has a role during embryogenesis. Independently of its catalytic activity, is required for membrane ruffling formation, actin organization and focal adhesion formation during directional cell migration by controlling integrin-induced translocation of the small GTPase RAC1 to the plasma membrane. Also functions in the nucleus where it acts as an activator of TUT1 adenylyltransferase activity in nuclear speckles, thereby regulating mRNA polyadenylation of a select set of mRNAs. This chain is Phosphatidylinositol 4-phosphate 5-kinase type-1 alpha, found in Homo sapiens (Human).